The chain runs to 527 residues: DUF21 domain-containing protein At1g47330 (527 aa).

Residues 1-15 (MSSDIPCCGTTFSLY) lie on the Extracellular side of the membrane. One can recognise a CNNM transmembrane domain in the interval 8–191 (CGTTFSLYVV…GKGGDLTTDE (184 aa)). Residues 16 to 36 (VVIIIALVAFAGLMAGLTLGL) traverse the membrane as a helical segment. The Cytoplasmic segment spans residues 37 to 70 (MSLGLVDLEVLIKSGRPQDRINAGKIFPVVKNQH). The helical transmembrane segment at 71–91 (LLLCTLLIGNSMAMEALPIFL) threads the bilayer. The Extracellular segment spans residues 92 to 93 (DK). A helical transmembrane segment spans residues 94–114 (IVPPWLAILLSVTLILVFGEI). The Cytoplasmic portion of the chain corresponds to 115–126 (MPQAVCTRYGLK). The chain crosses the membrane as a helical span at residues 127-147 (VGAIMAPFVRVLLVLFFPISY). Residues 148–527 (PISKVLDWML…PKHEESTQTL (380 aa)) are Extracellular-facing. CBS domains lie at 210–271 (MTPI…EVPL), 274–334 (MSMR…TKDE), and 366–435 (KSEN…ILDE). 3 disordered regions span residues 307 to 335 (KDLD…KDEL), 358 to 384 (ETGD…LLAA), and 464 to 527 (ITQS…TQTL). Position 315 is a phosphoserine (Ser-315). Over residues 358 to 369 (ETGDAKSGKSEN) the composition is skewed to basic and acidic residues. Residues 464-501 (ITQSSSGSTSPNQTSHMATPDSSPTTKPSNSSPTRKPS) show a composition bias toward low complexity. A glycan (N-linked (GlcNAc...) asparagine) is linked at Asn-475. Positions 502–515 (VSSPTREPSDSSHS) are enriched in polar residues. The span at 518–527 (PKHEESTQTL) shows a compositional bias: basic and acidic residues.

It is found in the membrane. This Arabidopsis thaliana (Mouse-ear cress) protein is DUF21 domain-containing protein At1g47330 (CBSDUF7).